Reading from the N-terminus, the 266-residue chain is UPF0294 protein YafD (266 aa).

This sequence belongs to the UPF0294 family.

Its subcellular location is the cytoplasm. The polypeptide is UPF0294 protein YafD (Salmonella dublin (strain CT_02021853)).